The primary structure comprises 288 residues: MEILRLAQSKKNIISLNMDLERDMQRIDEANQELLLKIQEKESEVQRLEHEITQTGDPAEDEEWEKENYTVMEREQALQELEEETARLERKNETLVHSISELQRKLTRKSQKIVRCEQGDLERTPEESKVKLQLLESSCADQEKELGKIMEDYVFVSQLCEDQALCIKKYQEALKRIEEELETGYLEREVSKVLSMDSEREKTVSLNEKDGFISNGALRFSKRIFRSLLFSTLFFIRLLGYLIFHLSFINPDLLVNALPKILSRDVLWKLRCFLFPSLTLETEDMLPH.

Positions Ile-13–Lys-105 form a coiled coil. A helical membrane pass occupies residues Ser-227–Ile-249.

In terms of tissue distribution, testis-specific. Expressed in spermatogenic cells of testis but disappear by the time mature spermatozoa are formed (at protein level).

It localises to the endoplasmic reticulum membrane. The protein resides in the nucleus membrane. This is Transmembrane and coiled-coil domain-containing protein 5A (Tmco5a) from Rattus norvegicus (Rat).